A 307-amino-acid chain; its full sequence is tRNA pseudouridine synthase B (307 aa).

The Nucleophile role is filled by D38.

The protein belongs to the pseudouridine synthase TruB family. Type 1 subfamily.

It carries out the reaction uridine(55) in tRNA = pseudouridine(55) in tRNA. In terms of biological role, responsible for synthesis of pseudouridine from uracil-55 in the psi GC loop of transfer RNAs. This Bacillus thuringiensis (strain Al Hakam) protein is tRNA pseudouridine synthase B.